Consider the following 72-residue polypeptide: UPF0270 protein YheU (72 aa).

The protein belongs to the UPF0270 family.

This is UPF0270 protein YheU from Shigella dysenteriae serotype 1 (strain Sd197).